Reading from the N-terminus, the 78-residue chain is Large ribosomal subunit protein bL28 (78 aa).

This sequence belongs to the bacterial ribosomal protein bL28 family.

The polypeptide is Large ribosomal subunit protein bL28 (Escherichia coli O139:H28 (strain E24377A / ETEC)).